A 476-amino-acid polypeptide reads, in one-letter code: ATP synthase subunit beta (476 aa).

Position 154–161 (154–161 (GGAGVGKT)) interacts with ATP.

The protein belongs to the ATPase alpha/beta chains family. F-type ATPases have 2 components, CF(1) - the catalytic core - and CF(0) - the membrane proton channel. CF(1) has five subunits: alpha(3), beta(3), gamma(1), delta(1), epsilon(1). CF(0) has four main subunits: a(1), b(1), b'(1) and c(9-12).

Its subcellular location is the cell inner membrane. The enzyme catalyses ATP + H2O + 4 H(+)(in) = ADP + phosphate + 5 H(+)(out). Produces ATP from ADP in the presence of a proton gradient across the membrane. The catalytic sites are hosted primarily by the beta subunits. In Rhodopseudomonas palustris (strain BisB5), this protein is ATP synthase subunit beta.